Here is a 938-residue protein sequence, read N- to C-terminus: Isoleucine--tRNA ligase (938 aa).

A 'HIGH' region motif is present at residues P58–T68. Residue E565 coordinates L-isoleucyl-5'-AMP. Positions K606–S610 match the 'KMSKS' region motif. K609 serves as a coordination point for ATP. Zn(2+) is bound by residues C905, C908, C925, and C928.

It belongs to the class-I aminoacyl-tRNA synthetase family. IleS type 1 subfamily. Monomer. Requires Zn(2+) as cofactor.

The protein localises to the cytoplasm. It catalyses the reaction tRNA(Ile) + L-isoleucine + ATP = L-isoleucyl-tRNA(Ile) + AMP + diphosphate. Catalyzes the attachment of isoleucine to tRNA(Ile). As IleRS can inadvertently accommodate and process structurally similar amino acids such as valine, to avoid such errors it has two additional distinct tRNA(Ile)-dependent editing activities. One activity is designated as 'pretransfer' editing and involves the hydrolysis of activated Val-AMP. The other activity is designated 'posttransfer' editing and involves deacylation of mischarged Val-tRNA(Ile). This chain is Isoleucine--tRNA ligase, found in Nitratidesulfovibrio vulgaris (strain DSM 19637 / Miyazaki F) (Desulfovibrio vulgaris).